The primary structure comprises 217 residues: MNLVLMGLPGAGKGTQGERIVEDYGIPHISTGDMFRAAMKEETPLGLEAKSYIDKGELVPDEVTIGIVKERLGKDDCERGFLLDGFPRTVAQAEALEEILEEYGKPIDYVINIEVDKDVLMERLTGRRICSVCGTTYHLVFNPPKTPGICDKDGGELYQRADDNEETVSKRLEVNMKQTQPLLDFYSEKGYLANVNGQQDIQDVYADVKDLLGGLKK.

10–15 contributes to the ATP binding site; sequence GAGKGT. The NMP stretch occupies residues 30-59; the sequence is STGDMFRAAMKEETPLGLEAKSYIDKGELV. AMP-binding positions include Thr-31, Arg-36, 57–59, 85–88, and Gln-92; these read ELV and GFPR. Positions 126-163 are LID; sequence GRRICSVCGTTYHLVFNPPKTPGICDKDGGELYQRADD. Residue Arg-127 participates in ATP binding. Zn(2+)-binding residues include Cys-130 and Cys-133. 136 to 137 provides a ligand contact to ATP; it reads TY. The Zn(2+) site is built by Cys-150 and Asp-153. Positions 160 and 171 each coordinate AMP. Residue Gln-199 participates in ATP binding.

Belongs to the adenylate kinase family. As to quaternary structure, monomer.

It is found in the cytoplasm. It carries out the reaction AMP + ATP = 2 ADP. It functions in the pathway purine metabolism; AMP biosynthesis via salvage pathway; AMP from ADP: step 1/1. Functionally, catalyzes the reversible transfer of the terminal phosphate group between ATP and AMP. Plays an important role in cellular energy homeostasis and in adenine nucleotide metabolism. This Bacillus subtilis (strain 168) protein is Adenylate kinase.